Consider the following 325-residue polypeptide: Elongation factor P--(R)-beta-lysine ligase (325 aa).

Substrate is bound at residue 76 to 78 (SPE). ATP contacts are provided by residues 100–102 (RNE) and N109. Residue Y118 participates in substrate binding. Residue 244 to 245 (EL) coordinates ATP. E251 contacts substrate. G300 is an ATP binding site.

The protein belongs to the class-II aminoacyl-tRNA synthetase family. EpmA subfamily. Homodimer.

The enzyme catalyses D-beta-lysine + L-lysyl-[protein] + ATP = N(6)-((3R)-3,6-diaminohexanoyl)-L-lysyl-[protein] + AMP + diphosphate + H(+). Functionally, with EpmB is involved in the beta-lysylation step of the post-translational modification of translation elongation factor P (EF-P). Catalyzes the ATP-dependent activation of (R)-beta-lysine produced by EpmB, forming a lysyl-adenylate, from which the beta-lysyl moiety is then transferred to the epsilon-amino group of a conserved specific lysine residue in EF-P. The protein is Elongation factor P--(R)-beta-lysine ligase of Pectobacterium carotovorum subsp. carotovorum (strain PC1).